The following is a 432-amino-acid chain: Glutamate-1-semialdehyde 2,1-aminomutase (432 aa).

Lys272 is modified (N6-(pyridoxal phosphate)lysine).

The protein belongs to the class-III pyridoxal-phosphate-dependent aminotransferase family. HemL subfamily. Homodimer. It depends on pyridoxal 5'-phosphate as a cofactor.

Its subcellular location is the cytoplasm. It catalyses the reaction (S)-4-amino-5-oxopentanoate = 5-aminolevulinate. Its pathway is porphyrin-containing compound metabolism; protoporphyrin-IX biosynthesis; 5-aminolevulinate from L-glutamyl-tRNA(Glu): step 2/2. It participates in porphyrin-containing compound metabolism; chlorophyll biosynthesis. In Trichormus variabilis (strain ATCC 29413 / PCC 7937) (Anabaena variabilis), this protein is Glutamate-1-semialdehyde 2,1-aminomutase.